A 245-amino-acid chain; its full sequence is 8-amino-3,8-dideoxy-manno-octulosonate cytidylyltransferase (245 aa).

This sequence belongs to the KdsB family.

It is found in the cytoplasm. The catalysed reaction is 8-amino-3,8-dideoxy-alpha-D-manno-octulosonate + CTP = CMP-8-amino-3,8-dideoxy-alpha-D-manno-oct-2-ulosonate + diphosphate. Its pathway is bacterial outer membrane biogenesis; lipopolysaccharide biosynthesis. Activates KDO8N (a required 8-carbon sugar) for incorporation into bacterial lipopolysaccharide in the Shewanella genus. The chain is 8-amino-3,8-dideoxy-manno-octulosonate cytidylyltransferase from Shewanella sp. (strain W3-18-1).